The chain runs to 216 residues: Type-4 uracil-DNA glycosylase (216 aa).

C14 and C17 together coordinate [4Fe-4S] cluster. Residues 41–43 (GEA), F55, and N82 each bind uracil. [4Fe-4S] cluster is bound by residues C86 and C102. Residue H164 participates in uracil binding.

The protein belongs to the uracil-DNA glycosylase (UDG) superfamily. Type 4 (UDGa) family. In terms of assembly, interacts with the sliding clamp PCNA3 subunit.

The catalysed reaction is Hydrolyzes single-stranded DNA or mismatched double-stranded DNA and polynucleotides, releasing free uracil.. Functionally, removes uracil bases that are present in DNA as a result of either deamination of cytosine or misincorporation of dUMP instead of dTMP. Can remove uracil from double-stranded DNA containing either a U/G or U/A base pair as well as from single-stranded DNA. This is Type-4 uracil-DNA glycosylase from Saccharolobus solfataricus (strain ATCC 35092 / DSM 1617 / JCM 11322 / P2) (Sulfolobus solfataricus).